The following is a 223-amino-acid chain: Putative 3-methyladenine DNA glycosylase (223 aa).

Belongs to the DNA glycosylase MPG family.

This Pseudomonas savastanoi pv. phaseolicola (strain 1448A / Race 6) (Pseudomonas syringae pv. phaseolicola (strain 1448A / Race 6)) protein is Putative 3-methyladenine DNA glycosylase.